A 765-amino-acid chain; its full sequence is uncharacterized protein (765 aa).

Positions Met-1 to Ala-22 are cleaved as a signal peptide. Cys-23 carries N-palmitoyl cysteine lipidation. Cys-23 carries S-diacylglycerol cysteine lipidation. 2 disordered regions span residues Glu-177–Ala-203 and Thr-218–Ser-255. Positions Thr-179–Arg-192 are enriched in polar residues. Over residues Ser-236–Gly-247 the composition is skewed to low complexity.

It belongs to the MG185/MG260 family.

It is found in the cell membrane. This is an uncharacterized protein from Mycoplasma genitalium (strain ATCC 33530 / DSM 19775 / NCTC 10195 / G37) (Mycoplasmoides genitalium).